Reading from the N-terminus, the 507-residue chain is Phosphoprotein (507 aa).

The tract at residues 56–79 is disordered; the sequence is DHQDISKPCFPAAGPGKSSMSRCH. 2 positions are modified to phosphoserine: serine 86 and serine 151. Residues 137 to 160 show a composition bias toward acidic residues; the sequence is DGVEVWGGDEESENSDVDSGEPDP. The disordered stretch occupies residues 137 to 307; that stretch reads DGVEVWGGDE…QSNIEPEDDY (171 aa). 2 stretches are compositionally biased toward basic and acidic residues: residues 189-199 and 222-233; these read EIQKLLEDQSR and TASEKPIKKGTD. Low complexity-rich tracts occupy residues 236-252 and 266-278; these read STSS…GGAT and NASA…SASN. Residues 279–301 show a composition bias toward polar residues; that stretch reads VSPTQGSKTESGTTTSRISQSNI. A multimerization region spans residues 304–376; it reads EDDYDDELFS…LSSFMIAIPG (73 aa). The interaction with the nucleocapsid (N-RNA) stretch occupies residues 459 to 507; that stretch reads ASRSVIRSIIKSSHLGEDRKDYLMSLLNDIQGSKDLAQFHQMLVKILKN.

The protein belongs to the morbillivirus P protein family. In terms of assembly, homotetramer. Interacts (via multimerization domain) with polymerase L; this interaction forms the polymerase L-P complex. Interacts (via N-terminus) with N0 (via Ncore); this interaction allows P to chaperon N0 to avoid N polymerization before encapsidation. Interacts (via C-terminus) with N-RNA template; this interaction positions the polymerase on the template for both transcription and replication. Post-translationally, phosphorylation on serines by host CK2 is necessary for the formation of viral factories.

Essential cofactor of the RNA polymerase L that plays a central role in the transcription and replication by forming the polymerase complex with RNA polymerase L and recruiting L to the genomic N-RNA template for RNA synthesis. Also plays a central role in the encapsidation of nascent RNA chains by forming the encapsidation complex with the nucleocapsid protein N (N-P complex). Acts as a chaperone for newly synthesized free N protein, so-called N0, allowing encapsidation of nascent RNA chains during replication. The nucleoprotein protein N prevents excessive phosphorylation of P, which leads to down-regulation of viral transcription/ replication. Participates, together with N, in the formation of viral factories (viroplasms), which are large inclusions in the host cytoplasm where replication takes place. This is Phosphoprotein (P/V) from Bos indicus (Zebu).